A 426-amino-acid polypeptide reads, in one-letter code: MTDTNSQWIEMNLQRQRKMLEDKQKQKRHQSAGSVRTTSTAMSMNSMKDYPTFDNSLPFSISDNSSVSVSMNTPLIPTQDPIAQPRMQSMPRQQPQQVQESLISIGDYPDNDINAKLSKVNLTSCVVSDDEDEDKRSYADSPWNTDVVADRIPSEVLPDYNFIKNNLAKFVEDPAVEHCLYKCSITRQKSGVDKGMFPTYFLHLEEFDTDKRQKIFLLAARKRKKSTTANYLLSTDPTNLSREGEGYCAKVRSNALGTQFTVYDSGQNPKKTTNHAAIRQELAAVIYETNVLGFKGPRKMTIVMPGIEPPTENRPAVRCPVRPIQDKHTLLERYRLNDLDSLKILSNKSPQWNDETQSYVLNFHGRVTQASVKNFQIIHQSSPEYIVMQFGRISDDEFTMDFRYPLSAVQAFGIAMTSFHGKLACE.

The required for localization to cilia in AWB sensory neurons stretch occupies residues 16–28 (QRKMLEDKQKQKR). A disordered region spans residues 19 to 39 (MLEDKQKQKRHQSAGSVRTTS).

It belongs to the TUB family. Interacts with rgb-3. As to expression, expressed in ciliated sensory neurons.

Its subcellular location is the cytoplasm. It is found in the cell projection. It localises to the axon. The protein localises to the dendrite. The protein resides in the cilium. Has a role in fat regulation independent of daf-16. Implicated in ciliar sensory function which is required for normal sensory behavior such as chemotaxis. Required for extension and growth of sensory neuronal cilia during postembryonic development, potentially via mediating signaling protein transport and localization of PI(4,5)P2 to the ciliary base. Functions in life span control via the insulin/IGF-1 pathway. Thought to be involved in neuronal trafficking. The protein is Tubby protein homolog 1 of Caenorhabditis elegans.